The chain runs to 5087 residues: Nonribosomal peptide synthetase sidC (5087 aa).

Residues 165 to 563 (HEMVRHTGNE…NGELQCMGRI (399 aa)) are adenylation 1. In terms of domain architecture, Carrier 1 spans 671-744 (EPAGDIEQKI…KMAALVLKSQ (74 aa)). Position 705 is an O-(pantetheine 4'-phosphoryl)serine (Ser-705). A condensation 1 region spans residues 782-1112 (DIIPCSPIQT…LFDTLFVWQD (331 aa)). The segment at 1217–1611 (ELAKTDSERI…GRRDDLVKIR (395 aa)) is adenylation 2. One can recognise a Carrier 2 domain in the interval 1740–1817 (ENLTDNEAKV…RLTRKISQSI (78 aa)). The residue at position 1777 (Ser-1777) is an O-(pantetheine 4'-phosphoryl)serine. The segment at 1855 to 2272 (KILPCTSLQE…RVMDFSLVES (418 aa)) is condensation 2. In terms of domain architecture, Carrier 3 spans 2302–2378 (EEWSAESLEI…EIASVLQGSK (77 aa)). The residue at position 2339 (Ser-2339) is an O-(pantetheine 4'-phosphoryl)serine. A condensation 3 region spans residues 2419–2831 (PCTTPQAGML…STSSSLDTAS (413 aa)). The interval 2860–3258 (ATRHPSRVAL…GRIDDQVKLR (399 aa)) is adenylation 3. A Carrier 4 domain is found at 3387–3464 (TEDTDTIRKI…LLAKAVESPD (78 aa)). The residue at position 3424 (Ser-3424) is an O-(pantetheine 4'-phosphoryl)serine. The condensation 4 stretch occupies residues 3506 to 3910 (ITPCTSLQDG…RSLVEEPFSN (405 aa)). One can recognise a Carrier 5 domain in the interval 3943–4019 (FQWSQAASLL…TMMAEVTVNG (77 aa)). Ser-3980 carries the O-(pantetheine 4'-phosphoryl)serine modification. The segment at 4051 to 4416 (EHIYPATPLQ…EYSICVELEA (366 aa)) is condensation 5. The Carrier 6 domain occupies 4496-4569 (SLLEERIRDT…KMAEIVNSAR (74 aa)). At Ser-4530 the chain carries O-(pantetheine 4'-phosphoryl)serine. The tract at residues 4610 to 4913 (FLPATAGQVY…IQSDLHEIGS (304 aa)) is condensation 6. Residues 5013-5048 (DVYKVSPPGSQLSQDSPEKQEANNKPSPQPSVDIEA) are disordered.

Belongs to the NRP synthetase family.

It participates in siderophore biosynthesis. Its function is as follows. Nonribosomal peptide synthetase; part of the siderophore biosynthetic pathway. Arthroderma benhamiae produces 2 types of extracellular siderophores, ferrichrome C and ferricrocin. The biosynthesis of these siderophores depends on the hydroxylation of ornithine to N(5)-hydroxyornithine, catalyzed by the monooxygenase sidA. The structure of ferricrocin differs from ferrichrome C only by a serine for alanine substitution and the assembly of both siderophores is suggested to be performed by the nonribosomal peptide synthase (NRPS) sidC. This is Nonribosomal peptide synthetase sidC from Arthroderma benhamiae (strain ATCC MYA-4681 / CBS 112371) (Trichophyton mentagrophytes).